A 494-amino-acid polypeptide reads, in one-letter code: UPF0371 protein str1377 (494 aa).

It belongs to the UPF0371 family.

The sequence is that of UPF0371 protein str1377 from Streptococcus thermophilus (strain CNRZ 1066).